Consider the following 365-residue polypeptide: Galactoside alpha-(1,2)-fucosyltransferase 1 (365 aa).

At 1-8 (MWPLSHRH) the chain is on the cytoplasmic side. A helical; Signal-anchor for type II membrane protein membrane pass occupies residues 9–25 (LCLAFLLVCVLSAISFF). Topologically, residues 26-365 (LHIYQDSIRH…LSPLWTLAEP (340 aa)) are lumenal. N-linked (GlcNAc...) asparagine glycosylation is found at N65, N301, and N327.

It belongs to the glycosyltransferase 11 family.

It localises to the golgi apparatus. It is found in the golgi stack membrane. It carries out the reaction a beta-D-galactosyl-(1-&gt;4)-N-acetyl-beta-D-glucosaminyl derivative + GDP-beta-L-fucose = an alpha-L-Fuc-(1-&gt;2)-beta-D-Gal-(1-&gt;4)-beta-D-GlcNAc derivative + GDP + H(+). The catalysed reaction is a ganglioside GA1 + GDP-beta-L-fucose = a ganglioside Fuc-GA1 + GDP + H(+). The enzyme catalyses a beta-D-Gal-(1-&gt;3)-beta-D-GlcNAc-(1-&gt;3)-beta-D-Gal-(1-&gt;4)-beta-D-Glc-(1&lt;-&gt;1')-Cer(d18:1(4E)) + GDP-beta-L-fucose = alpha-L-fucosyl-(1-&gt;2)- beta-D-galactosyl-(1-&gt;3)-N-acetyl-beta-D-glucosaminyl-(1-&gt;3)-beta-D-galactosyl-(1-&gt;4)-beta-D-glucosyl-(1&lt;-&gt;1')-N-acylsphing-4-enine + GDP + H(+). It catalyses the reaction a neolactoside nLc4Cer(d18:1(4E)) + GDP-beta-L-fucose = a neolactoside IV(2)-alpha-Fuc-nLc4Cer(d18:1(4E)) + GDP + H(+). It carries out the reaction a ganglioside GM1 + GDP-beta-L-fucose = a ganglioside Fuc-GM1 + GDP + H(+). The catalysed reaction is beta-D-galactosyl-(1-&gt;3)-N-acetyl-D-galactosamine + GDP-beta-L-fucose = alpha-L-fucosyl-(1-&gt;2)-beta-D-galactosyl-(1-&gt;3)-N-acetyl-D-galactosamine + GDP + H(+). The protein operates within protein modification; protein glycosylation. Its function is as follows. Catalyzes the transfer of L-fucose, from a guanosine diphosphate-beta-L-fucose, to the terminal galactose residue of glycoconjugates through an alpha(1,2) linkage leading to H antigen synthesis that is an intermediate substrate in the synthesis of ABO blood group antigens. H antigen is essential for maturation of the glomerular layer of the main olfactory bulb, in cell migration and early cell-cell contacts during tumor associated angiogenesis. Preferentially fucosylates soluble lactose and to a lesser extent fucosylates glycolipids gangliosides GA1 and GM1a. The polypeptide is Galactoside alpha-(1,2)-fucosyltransferase 1 (Mico humeralifer (Black and white tassel-ear marmoset)).